A 156-amino-acid polypeptide reads, in one-letter code: ATP synthase subunit b (156 aa).

Residues 12–32 traverse the membrane as a helical segment; sequence VAFLIFVLFCMKYVWPPVITA.

Belongs to the ATPase B chain family. F-type ATPases have 2 components, F(1) - the catalytic core - and F(0) - the membrane proton channel. F(1) has five subunits: alpha(3), beta(3), gamma(1), delta(1), epsilon(1). F(0) has three main subunits: a(1), b(2) and c(10-14). The alpha and beta chains form an alternating ring which encloses part of the gamma chain. F(1) is attached to F(0) by a central stalk formed by the gamma and epsilon chains, while a peripheral stalk is formed by the delta and b chains.

The protein resides in the cell inner membrane. F(1)F(0) ATP synthase produces ATP from ADP in the presence of a proton or sodium gradient. F-type ATPases consist of two structural domains, F(1) containing the extramembraneous catalytic core and F(0) containing the membrane proton channel, linked together by a central stalk and a peripheral stalk. During catalysis, ATP synthesis in the catalytic domain of F(1) is coupled via a rotary mechanism of the central stalk subunits to proton translocation. In terms of biological role, component of the F(0) channel, it forms part of the peripheral stalk, linking F(1) to F(0). In Pseudomonas putida (strain ATCC 47054 / DSM 6125 / CFBP 8728 / NCIMB 11950 / KT2440), this protein is ATP synthase subunit b.